Here is a 433-residue protein sequence, read N- to C-terminus: Serine hydroxymethyltransferase (433 aa).

121 to 123 lines the (6S)-5,6,7,8-tetrahydrofolate pocket; it reads AHV. Residue Lys-227 is modified to N6-(pyridoxal phosphate)lysine. Glu-243 contributes to the (6S)-5,6,7,8-tetrahydrofolate binding site.

It belongs to the SHMT family. In terms of assembly, homodimer. Pyridoxal 5'-phosphate is required as a cofactor.

Its subcellular location is the cytoplasm. It functions in the pathway amino-acid biosynthesis; glycine biosynthesis; glycine from L-serine: step 1/1. Catalyzes the reversible interconversion of serine and glycine with a modified folate serving as the one-carbon carrier. Also exhibits a pteridine-independent aldolase activity toward beta-hydroxyamino acids, producing glycine and aldehydes, via a retro-aldol mechanism. In Saccharolobus islandicus (strain Y.N.15.51 / Yellowstone #2) (Sulfolobus islandicus), this protein is Serine hydroxymethyltransferase.